The sequence spans 492 residues: Glutamyl-tRNA(Gln) amidotransferase subunit A (492 aa).

Active-site charge relay system residues include Lys-79 and Ser-154. The Acyl-ester intermediate role is filled by Ser-178.

Belongs to the amidase family. GatA subfamily. Heterotrimer of A, B and C subunits.

The catalysed reaction is L-glutamyl-tRNA(Gln) + L-glutamine + ATP + H2O = L-glutaminyl-tRNA(Gln) + L-glutamate + ADP + phosphate + H(+). In terms of biological role, allows the formation of correctly charged Gln-tRNA(Gln) through the transamidation of misacylated Glu-tRNA(Gln) in organisms which lack glutaminyl-tRNA synthetase. The reaction takes place in the presence of glutamine and ATP through an activated gamma-phospho-Glu-tRNA(Gln). This is Glutamyl-tRNA(Gln) amidotransferase subunit A from Acinetobacter baylyi (strain ATCC 33305 / BD413 / ADP1).